A 559-amino-acid chain; its full sequence is Non-homologous end joining factor IFFO1 (559 aa).

The tract at residues G21 to G57 is disordered. The segment covering P39 to G57 has biased composition (pro residues). Positions A65–R116 are LMNA binding. Residues N73–K526 form the IF rod domain. Residues R85–R117 adopt a coiled-coil conformation. Residues S158–S187 are disordered. Residues E237 to L301 are a coiled coil. Residues S360–S394 are disordered. The interval E450 to R525 is XCCR4 binding. Required for localization to the double-strand breaks (DSBs). The stretch at L455–M501 forms a coiled coil. The segment at T520–R559 is disordered. Over residues R550–R559 the composition is skewed to basic and acidic residues.

This sequence belongs to the intermediate filament family. Forms a heterotetramer with XRCC4. The interaction with XRCC4 is direct, involves LIG4-free XRCC4 and leads to relocalization of IFFO1 at the double-strand break (DSB) sites. Interacts with LMNA; the interaction forms an interior nucleoskeleton and the recruitment to DNA double-strand breaks. In terms of tissue distribution, ubiquitously expressed.

Its subcellular location is the nucleus. It localises to the nucleoplasm. It is found in the nucleus inner membrane. The protein resides in the nucleus matrix. Its function is as follows. Nuclear matrix protein involved in the immobilization of broken DNA ends and the suppression of chromosome translocation during DNA double-strand breaks (DSBs). Interacts with the nuclear lamina component LMNA, resulting in the formation of a nucleoskeleton that relocalizes to the DSB sites in a XRCC4-dependent manner and promotes the immobilization of the broken ends, thereby preventing chromosome translocation. Acts as a scaffold that allows the DNA repair protein XRCC4 and LMNA to assemble into a complex at the DSB sites. This Homo sapiens (Human) protein is Non-homologous end joining factor IFFO1.